The sequence spans 831 residues: MLTIQFLCPLPNGLHARPAWELKEQCSQWQSEITFINHRQNAKADAKSSLALIGTGTLFNDSCSLNISGSDEEQARRVLEEYILVRFIDSDSVQPTQAELTAHPLPRSLSRLNPDLLYGNVLASGVGVGTLTLLQSDSLDSYRAIPASAQDSTRLEHSLATLAEQLNQQLRERDGESKTILSAHLSLIQDDEFAGNIRRLMTEQHQGLGAAIISNMEQVCAKLSASASDYLRERVSDIRDISEQLLHITWPELKPRNNLVLEKPTILVAEDLTPSQFLSLDLKNLAGMILEKTGRTSHTLILARASAIPVLSGLPLDAIARYAGQPAVLDAQCGVLAINPNDAVSGYYQVAQTLADKRQKQQAQAAAQLAYSRDNKRIDIVANIGTALEAPGAFANGAEGVGLFRTEMLYMDRDSAPDEQEQFEAYQQVLLAAGDKPIIFRTMDIGGDKSIPYLNIPQEENPFLGYRAVRIYPEFAGLFRTQLRAILRAASFGNAQLMIPMVHSLDQILWVKGEIQKAIVELKRDGLRHAETITLGIMVEVPSVCYIIDHFCDEVDFFSIGSNDMTQYLYAVDRNNPRVSPLYNPITPSFLRMLQQIVTTAHQRGKWVGICGELGGESRYLPLLLGLGLDELSMSSPRIPAVKSQLRQLDSEACRELARQACECRSAQEIEALLTAFTPEEDVRPLLALENIFVDQDFSNKEQAIQFLCGNLGVNGRTEHPFELEEDVWQREEIVTTGVGFGVAIPHTKSQWIRHSSISIARLAKPVDWQSEMGEVELVIMLTLGANEGMNHVKVFSQLARKLVNKNFRQSLFAAQDAQSILTLLETELTF.

An HPr domain is found at 1–90; the sequence is MLTIQFLCPL…EYILVRFIDS (90 aa). Residue histidine 15 is the Pros-phosphohistidine intermediate; for HPr activity of the active site. Histidine 15 carries the post-translational modification Phosphohistidine; by EI. The tract at residues 119–650 is PTS EI; it reads GNVLASGVGV…AVKSQLRQLD (532 aa). Residue histidine 298 is the Tele-phosphohistidine intermediate; for PTS EI activity of the active site. Histidine 298 bears the Phosphohistidine; by autocatalysis mark. 2 residues coordinate phosphoenolpyruvate: arginine 405 and arginine 441. The Mg(2+) site is built by glutamate 540 and aspartate 564. Phosphoenolpyruvate-binding positions include 563–564 and arginine 574; that span reads ND. Residue cysteine 611 is the Proton donor; for EI activity of the active site. The PTS EIIA type-2 domain maps to 685–828; it reads PLLALENIFV…QSILTLLETE (144 aa). Histidine 747 functions as the Tele-phosphohistidine intermediate; for PTS EIIA activity in the catalytic mechanism. Position 747 is a phosphohistidine; by HPr (histidine 747).

The protein belongs to the PEP-utilizing enzyme family. Mg(2+) serves as cofactor.

The protein resides in the cytoplasm. It carries out the reaction L-histidyl-[protein] + phosphoenolpyruvate = N(pros)-phospho-L-histidyl-[protein] + pyruvate. It catalyses the reaction D-fructose(out) + N(pros)-phospho-L-histidyl-[protein] = D-fructose 1-phosphate(in) + L-histidyl-[protein]. Its function is as follows. Multifunctional protein that includes general (non sugar-specific) and sugar-specific components of the phosphoenolpyruvate-dependent sugar phosphotransferase system (sugar PTS). This major carbohydrate active transport system catalyzes the phosphorylation of incoming sugar substrates concomitantly with their translocation across the cell membrane. The enzyme II FryABC PTS system is involved in fructose transport. This chain is Multiphosphoryl transfer protein (fryA), found in Shigella flexneri.